The following is a 277-amino-acid chain: Proteasome subunit beta type-7 (277 aa).

Residues 1–43 constitute a propeptide, removed in mature form; the sequence is MAAVSVYAPPVGGFSFDNCRRNAVLEADFAKRGYKLPKVRKTG. Thr-44 acts as the Nucleophile in catalysis.

This sequence belongs to the peptidase T1B family. As to quaternary structure, the 26S proteasome consists of a 20S proteasome core and two 19S regulatory subunits. The 20S proteasome core is a barrel-shaped complex made of 28 subunits that are arranged in four stacked rings. The two outer rings are each formed by seven alpha subunits, and the two inner rings are formed by seven beta subunits. The proteolytic activity is exerted by three beta-subunits PSMB5, PSMB6 and PSMB7. In terms of assembly, (Microbial infection) Interacts with HIV-1 Tat protein. In terms of tissue distribution, expressed at a low level in colonic mucosa. Up-regulated in colorectal cancer tissues.

Its subcellular location is the cytoplasm. It localises to the nucleus. It catalyses the reaction Cleavage of peptide bonds with very broad specificity.. In terms of biological role, component of the 20S core proteasome complex involved in the proteolytic degradation of most intracellular proteins. This complex plays numerous essential roles within the cell by associating with different regulatory particles. Associated with two 19S regulatory particles, forms the 26S proteasome and thus participates in the ATP-dependent degradation of ubiquitinated proteins. The 26S proteasome plays a key role in the maintenance of protein homeostasis by removing misfolded or damaged proteins that could impair cellular functions, and by removing proteins whose functions are no longer required. Associated with the PA200 or PA28, the 20S proteasome mediates ubiquitin-independent protein degradation. This type of proteolysis is required in several pathways including spermatogenesis (20S-PA200 complex) or generation of a subset of MHC class I-presented antigenic peptides (20S-PA28 complex). Within the 20S core complex, PSMB7 displays a trypsin-like activity. This chain is Proteasome subunit beta type-7, found in Homo sapiens (Human).